We begin with the raw amino-acid sequence, 657 residues long: Protein mono-ADP-ribosyltransferase TIPARP (657 aa).

A compositionally biased stretch (acidic residues) spans 1–10; that stretch reads MEVETTEPEP. The interval 1 to 22 is disordered; the sequence is MEVETTEPEPDCVVQPPSPSDD. C39 is modified (ADP-ribosylcysteine). The short motif at 41 to 48 is the Nuclear localization signal element; it reads KKKQEQKR. The segment at 121–154 is disordered; the sequence is QLPEAHPSTDAPEQGVPIQDHSFPPETISGTVAD. A C3H1-type zinc finger spans residues 238–265; the sequence is ENGIEICMDFLQGTCIYGRDCLKHHTVL. Positions 333–411 constitute a WWE domain; sequence STPPCSNSNS…RRPLFRSCFI (79 aa). The 209-residue stretch at 449-657 folds into the PARP catalytic domain; sequence YPETWVYMHP…YEEVSNTVSI (209 aa).

This sequence belongs to the ARTD/PARP family. In terms of assembly, interacts with AHR. In terms of processing, auto-mono-ADP-ribosylated. As to expression, ubiquitously expressed.

Its subcellular location is the nucleus. The enzyme catalyses L-aspartyl-[protein] + NAD(+) = 4-O-(ADP-D-ribosyl)-L-aspartyl-[protein] + nicotinamide. It carries out the reaction L-glutamyl-[protein] + NAD(+) = 5-O-(ADP-D-ribosyl)-L-glutamyl-[protein] + nicotinamide. The catalysed reaction is L-cysteinyl-[protein] + NAD(+) = S-(ADP-D-ribosyl)-L-cysteinyl-[protein] + nicotinamide + H(+). Its function is as follows. ADP-ribosyltransferase that mediates mono-ADP-ribosylation of glutamate, aspartate and cysteine residues on target proteins. Acts as a negative regulator of AHR by mediating mono-ADP-ribosylation of AHR, leading to inhibit transcription activator activity of AHR. This Mus musculus (Mouse) protein is Protein mono-ADP-ribosyltransferase TIPARP.